Here is a 734-residue protein sequence, read N- to C-terminus: Photosystem I P700 chlorophyll a apoprotein A2 (734 aa).

A run of 8 helical transmembrane segments spans residues 46–69 (IFASHFGQLTVIFLWTSGNLFHVA), 135–158 (LYTGAIFLLALSALFLIAGWLHLQ), 175–199 (LNHHLSGLFGVSSLAWAGHLVHVAI), 273–291 (IAHHHLAIAVVFIIAGHMY), 330–353 (LHFQLGLALAALGVITSLVAQHMY), 369–395 (AALYTHHQYIAGFLMTGAFAHGAIFFI), 417–439 (AIISHLSWASLFLGFHTLGLYVH), and 517–535 (FLVHHAIALGLHTTTLILV). Residues Cys559 and Cys568 each contribute to the [4Fe-4S] cluster site. 2 consecutive transmembrane segments (helical) span residues 575 to 596 (AFYLAVFWMLNTIGWVTFYWHW) and 643 to 665 (LSVWAWMFLFGHLVWAIGFMFLI). Chlorophyll a contacts are provided by His654, Met662, and Tyr670. Position 671 (Trp671) interacts with phylloquinone. Residues 707 to 727 (LVGLAHFSVGYIFTYAAFLIA) traverse the membrane as a helical segment.

Belongs to the PsaA/PsaB family. As to quaternary structure, the PsaA/B heterodimer binds the P700 chlorophyll special pair and subsequent electron acceptors. PSI consists of a core antenna complex that captures photons, and an electron transfer chain that converts photonic excitation into a charge separation. The eukaryotic PSI reaction center is composed of at least 11 subunits. P700 is a chlorophyll a/chlorophyll a' dimer, A0 is one or more chlorophyll a, A1 is one or both phylloquinones and FX is a shared 4Fe-4S iron-sulfur center. serves as cofactor.

The protein localises to the plastid. The protein resides in the chloroplast thylakoid membrane. It carries out the reaction reduced [plastocyanin] + hnu + oxidized [2Fe-2S]-[ferredoxin] = oxidized [plastocyanin] + reduced [2Fe-2S]-[ferredoxin]. In terms of biological role, psaA and PsaB bind P700, the primary electron donor of photosystem I (PSI), as well as the electron acceptors A0, A1 and FX. PSI is a plastocyanin-ferredoxin oxidoreductase, converting photonic excitation into a charge separation, which transfers an electron from the donor P700 chlorophyll pair to the spectroscopically characterized acceptors A0, A1, FX, FA and FB in turn. Oxidized P700 is reduced on the lumenal side of the thylakoid membrane by plastocyanin. In Psilotum nudum (Whisk fern), this protein is Photosystem I P700 chlorophyll a apoprotein A2.